Reading from the N-terminus, the 148-residue chain is Deoxyuridine 5'-triphosphate nucleotidohydrolase (148 aa).

Substrate contacts are provided by residues 68 to 70 (RSG), N81, and 85 to 87 (TID).

Belongs to the dUTPase family. Requires Mg(2+) as cofactor.

It catalyses the reaction dUTP + H2O = dUMP + diphosphate + H(+). The protein operates within pyrimidine metabolism; dUMP biosynthesis; dUMP from dCTP (dUTP route): step 2/2. This enzyme is involved in nucleotide metabolism: it produces dUMP, the immediate precursor of thymidine nucleotides and it decreases the intracellular concentration of dUTP so that uracil cannot be incorporated into DNA. The sequence is that of Deoxyuridine 5'-triphosphate nucleotidohydrolase from Geobacter metallireducens (strain ATCC 53774 / DSM 7210 / GS-15).